Reading from the N-terminus, the 139-residue chain is 6,7-dimethyl-8-ribityllumazine synthase (139 aa).

5-amino-6-(D-ribitylamino)uracil-binding positions include Phe11, 42–44 (ALE), and 66–68 (VVI). (2S)-2-hydroxy-3-oxobutyl phosphate is bound at residue 71 to 72 (ET). The Proton donor role is filled by His74. Asn98 contributes to the 5-amino-6-(D-ribitylamino)uracil binding site. Arg112 is a (2S)-2-hydroxy-3-oxobutyl phosphate binding site.

This sequence belongs to the DMRL synthase family.

The catalysed reaction is (2S)-2-hydroxy-3-oxobutyl phosphate + 5-amino-6-(D-ribitylamino)uracil = 6,7-dimethyl-8-(1-D-ribityl)lumazine + phosphate + 2 H2O + H(+). Its pathway is cofactor biosynthesis; riboflavin biosynthesis; riboflavin from 2-hydroxy-3-oxobutyl phosphate and 5-amino-6-(D-ribitylamino)uracil: step 1/2. Functionally, catalyzes the formation of 6,7-dimethyl-8-ribityllumazine by condensation of 5-amino-6-(D-ribitylamino)uracil with 3,4-dihydroxy-2-butanone 4-phosphate. This is the penultimate step in the biosynthesis of riboflavin. This Zymomonas mobilis subsp. mobilis (strain ATCC 31821 / ZM4 / CP4) protein is 6,7-dimethyl-8-ribityllumazine synthase.